Here is a 198-residue protein sequence, read N- to C-terminus: Pyridoxal 5'-phosphate synthase subunit PdxT (198 aa).

52-54 (GES) lines the L-glutamine pocket. Residue cysteine 84 is the Nucleophile of the active site. L-glutamine contacts are provided by residues arginine 115 and 142-143 (IR). Residues histidine 178 and glutamate 180 each act as charge relay system in the active site.

It belongs to the glutaminase PdxT/SNO family. As to quaternary structure, in the presence of PdxS, forms a dodecamer of heterodimers. Only shows activity in the heterodimer.

It catalyses the reaction aldehydo-D-ribose 5-phosphate + D-glyceraldehyde 3-phosphate + L-glutamine = pyridoxal 5'-phosphate + L-glutamate + phosphate + 3 H2O + H(+). The catalysed reaction is L-glutamine + H2O = L-glutamate + NH4(+). The protein operates within cofactor biosynthesis; pyridoxal 5'-phosphate biosynthesis. In terms of biological role, catalyzes the hydrolysis of glutamine to glutamate and ammonia as part of the biosynthesis of pyridoxal 5'-phosphate. The resulting ammonia molecule is channeled to the active site of PdxS. This is Pyridoxal 5'-phosphate synthase subunit PdxT from Archaeoglobus fulgidus (strain ATCC 49558 / DSM 4304 / JCM 9628 / NBRC 100126 / VC-16).